The sequence spans 473 residues: Protein translocase subunit SecA (473 aa).

Asp-127 contributes to the ATP binding site. Residues 424 to 447 are disordered; that stretch reads VAEGKAVHQDTSKQEPKKKQPIRK. Residues Cys-457, Cys-459, Cys-468, and Cys-469 each contribute to the Zn(2+) site.

Belongs to the SecA family. As to quaternary structure, monomer and homodimer. Part of the essential Sec protein translocation apparatus which comprises SecA, SecYEG and auxiliary proteins SecDF. Other proteins may also be involved. It depends on Zn(2+) as a cofactor.

Its subcellular location is the cell membrane. It localises to the cytoplasm. The enzyme catalyses ATP + H2O + cellular proteinSide 1 = ADP + phosphate + cellular proteinSide 2.. Functionally, part of the Sec protein translocase complex. Interacts with the SecYEG preprotein conducting channel. Has a central role in coupling the hydrolysis of ATP to the transfer of proteins into and across the cell membrane, serving as an ATP-driven molecular motor driving the stepwise translocation of polypeptide chains across the membrane. This Cytobacillus firmus (Bacillus firmus) protein is Protein translocase subunit SecA.